We begin with the raw amino-acid sequence, 220 residues long: uncharacterized protein (220 aa).

Residues 196–220 are disordered; it reads KDDNSKDDNNDSEDLSKQIDNLKLD.

This is an uncharacterized protein from Invertebrate iridescent virus 6 (IIV-6).